A 593-amino-acid polypeptide reads, in one-letter code: Translation initiation factor IF-2 (593 aa).

One can recognise a tr-type G domain in the interval 101–270 (LRPPVVTIMG…LLIAELEDLR (170 aa)). A G1 region spans residues 110 to 117 (GHVDHGKT). 110-117 (GHVDHGKT) provides a ligand contact to GTP. The G2 stretch occupies residues 135–139 (GITQH). Residues 156–159 (DTPG) are G3. Residues 156-160 (DTPGH) and 210-213 (NKMD) contribute to the GTP site. Positions 210-213 (NKMD) are G4. The G5 stretch occupies residues 246 to 248 (SAR).

The protein belongs to the TRAFAC class translation factor GTPase superfamily. Classic translation factor GTPase family. IF-2 subfamily.

The protein resides in the cytoplasm. Functionally, one of the essential components for the initiation of protein synthesis. Protects formylmethionyl-tRNA from spontaneous hydrolysis and promotes its binding to the 30S ribosomal subunits. Also involved in the hydrolysis of GTP during the formation of the 70S ribosomal complex. This is Translation initiation factor IF-2 from Dehalococcoides mccartyi (strain CBDB1).